A 758-amino-acid chain; its full sequence is Matrix metalloproteinase-2 (758 aa).

The first 17 residues, 1 to 17 (MFSKYVLATLLALFAQS), serve as a signal peptide directing secretion. Residue histidine 257 participates in Zn(2+) binding. The active site involves glutamate 258. Residues histidine 261 and histidine 267 each coordinate Zn(2+). The disordered stretch occupies residues 335-514 (AYWPWNNPSN…HNKPRKPKPD (180 aa)). Residues 338–348 (PWNNPSNNPNN) show a composition bias toward low complexity. Over residues 349-476 (DRNRARERQE…EWERRNRNGA (128 aa)) the composition is skewed to basic and acidic residues. The segment covering 479–494 (PVTPTANTTPRPTNKP) has biased composition (low complexity). The span at 499–510 (HRQHHHHNKPRK) shows a compositional bias: basic residues. Hemopexin repeat units follow at residues 513-561 (PDSC…WSAL), 565-610 (LTKV…GLPP), 612-659 (LTHI…WSGV), and 660-707 (GYNI…WMQC). A disulfide bond links cysteine 516 and cysteine 707. Residues 739–756 (LRINHFILSILLLAIANW) form a helical membrane-spanning segment. Residues 757-758 (RS) lie on the Cytoplasmic side of the membrane.

The protein belongs to the peptidase M10A family. Requires Ca(2+) as cofactor. The cofactor is Zn(2+). As to expression, widely expressed during embryogenesis including in the mesoderm, developing gut, central and peripheral nervous systems and imaginal disks. In the embryonic nervous system, expressed in neurons and glia. In third instar larvae, strongly expressed in the morphogenetic furrow of eye imaginal disks and in the optic lobe region of the brain. Expressed in posterior follicle cells in all mature stage 14 follicles but not in earlier follicles and is also expressed in some anterior follicle cells that help form dorsal eggshell structures.

It localises to the cell membrane. Its function is as follows. Has metalloproteinase activity. Proteolytically cleaves the PGRP-LC receptor; involved in gut-fat body innate immunological communication (GFIC)-mediated activation of the imd/Relish signal transduction pathway. Required for larval tissue histolysis during metamorphosis and is involved in pupal head eversion and fusion of the wing imaginal tissue. Required for growth of the dorsal air sac primordium and development of the dorsal air sacs. Promotes embryonic motor axon fasciculation. Cleaves and activates frac to promote motor axon bundling during outgrowth. Promotes the reshaping of adult sensory neuron dendrites from a radial to lattice-like shape which occurs after eclosion by degrading the basement membrane on which the dendrites grow. Involved in inhibition of follicle stem cell proliferation by cleaving Dlp, inhibiting its interaction with wg and preventing Dlp-mediated spreading of wg to follicle stem cells to enhance their proliferation. Plays a role in wound healing. Involved in fat body dissociation which occurs during metamorphosis by degrading basement membrane components, leading to destruction of cell-basement membrane junctions. Required for posterior follicle cell degradation and ovulation. The polypeptide is Matrix metalloproteinase-2 (Drosophila melanogaster (Fruit fly)).